A 225-amino-acid chain; its full sequence is Uracil-DNA glycosylase (225 aa).

Asp-65 serves as the catalytic Proton acceptor.

Belongs to the uracil-DNA glycosylase (UDG) superfamily. UNG family.

It is found in the cytoplasm. The enzyme catalyses Hydrolyzes single-stranded DNA or mismatched double-stranded DNA and polynucleotides, releasing free uracil.. Functionally, excises uracil residues from the DNA which can arise as a result of misincorporation of dUMP residues by DNA polymerase or due to deamination of cytosine. The chain is Uracil-DNA glycosylase from Bacillus thuringiensis subsp. konkukian (strain 97-27).